The following is a 226-amino-acid chain: 2-C-methyl-D-erythritol 4-phosphate cytidylyltransferase (226 aa).

Belongs to the IspD/TarI cytidylyltransferase family. IspD subfamily.

It catalyses the reaction 2-C-methyl-D-erythritol 4-phosphate + CTP + H(+) = 4-CDP-2-C-methyl-D-erythritol + diphosphate. It functions in the pathway isoprenoid biosynthesis; isopentenyl diphosphate biosynthesis via DXP pathway; isopentenyl diphosphate from 1-deoxy-D-xylulose 5-phosphate: step 2/6. In terms of biological role, catalyzes the formation of 4-diphosphocytidyl-2-C-methyl-D-erythritol from CTP and 2-C-methyl-D-erythritol 4-phosphate (MEP). The polypeptide is 2-C-methyl-D-erythritol 4-phosphate cytidylyltransferase (Bacillus thuringiensis (strain Al Hakam)).